A 353-amino-acid polypeptide reads, in one-letter code: Methylthioribose-1-phosphate isomerase (353 aa).

Residues 51–53 (RGA), R94, and Q203 each bind substrate. D244 acts as the Proton donor in catalysis. 254-255 (NK) contacts substrate.

The protein belongs to the eIF-2B alpha/beta/delta subunits family. MtnA subfamily.

The enzyme catalyses 5-(methylsulfanyl)-alpha-D-ribose 1-phosphate = 5-(methylsulfanyl)-D-ribulose 1-phosphate. It participates in amino-acid biosynthesis; L-methionine biosynthesis via salvage pathway; L-methionine from S-methyl-5-thio-alpha-D-ribose 1-phosphate: step 1/6. Its function is as follows. Catalyzes the interconversion of methylthioribose-1-phosphate (MTR-1-P) into methylthioribulose-1-phosphate (MTRu-1-P). The polypeptide is Methylthioribose-1-phosphate isomerase (Trichodesmium erythraeum (strain IMS101)).